The chain runs to 794 residues: Inactive zinc metalloprotease C354.09c (794 aa).

Residues 1 to 56 (MTDEKHVYVPPPKDPPSYEEVALHSALNNSAPPNDGEQNETSMEEMEIIEPPSEDS) are disordered. A helical membrane pass occupies residues 91-111 (IPFQFLYLAVIATVIILASYY).

Belongs to the peptidase M28 family. M28B subfamily.

Its subcellular location is the membrane. The polypeptide is Inactive zinc metalloprotease C354.09c (Schizosaccharomyces pombe (strain 972 / ATCC 24843) (Fission yeast)).